Reading from the N-terminus, the 427-residue chain is Trigger factor (427 aa).

The region spanning 163-248 (GDTVVIDFVG…VNEVKAKELP (86 aa)) is the PPIase FKBP-type domain.

The protein belongs to the FKBP-type PPIase family. Tig subfamily.

It localises to the cytoplasm. The catalysed reaction is [protein]-peptidylproline (omega=180) = [protein]-peptidylproline (omega=0). Functionally, involved in protein export. Acts as a chaperone by maintaining the newly synthesized protein in an open conformation. Functions as a peptidyl-prolyl cis-trans isomerase. The polypeptide is Trigger factor (Lactococcus lactis subsp. cremoris (strain MG1363)).